The primary structure comprises 355 residues: Phenylalanine--tRNA ligase alpha subunit (355 aa).

Glu-273 serves as a coordination point for Mg(2+).

The protein belongs to the class-II aminoacyl-tRNA synthetase family. Phe-tRNA synthetase alpha subunit type 1 subfamily. Tetramer of two alpha and two beta subunits. Requires Mg(2+) as cofactor.

It is found in the cytoplasm. The enzyme catalyses tRNA(Phe) + L-phenylalanine + ATP = L-phenylalanyl-tRNA(Phe) + AMP + diphosphate + H(+). The polypeptide is Phenylalanine--tRNA ligase alpha subunit (Bifidobacterium animalis subsp. lactis (strain AD011)).